We begin with the raw amino-acid sequence, 37 residues long: Large ribosomal subunit protein bL36 (37 aa).

This sequence belongs to the bacterial ribosomal protein bL36 family.

This chain is Large ribosomal subunit protein bL36, found in Alkaliphilus metalliredigens (strain QYMF).